Consider the following 486-residue polypeptide: ATP synthase subunit beta (486 aa).

164-171 (GGAGVGKT) is an ATP binding site.

It belongs to the ATPase alpha/beta chains family. As to quaternary structure, F-type ATPases have 2 components, CF(1) - the catalytic core - and CF(0) - the membrane proton channel. CF(1) has five subunits: alpha(3), beta(3), gamma(1), delta(1), epsilon(1). CF(0) has four main subunits: a(1), b(1), b'(1) and c(9-12).

It localises to the cellular thylakoid membrane. The enzyme catalyses ATP + H2O + 4 H(+)(in) = ADP + phosphate + 5 H(+)(out). In terms of biological role, produces ATP from ADP in the presence of a proton gradient across the membrane. The catalytic sites are hosted primarily by the beta subunits. This chain is ATP synthase subunit beta, found in Prochlorococcus marinus (strain MIT 9312).